Here is a 447-residue protein sequence, read N- to C-terminus: Adenylosuccinate synthetase (447 aa).

Residues 35-41 (GDEGKGK) and 63-65 (GHT) each bind GTP. Catalysis depends on D36, which acts as the Proton acceptor. The Mg(2+) site is built by D36 and G63. Residues 36 to 39 (DEGK), 61 to 64 (NAGH), T153, R167, N245, T260, and R324 each bind IMP. Residue H64 is the Proton donor of the active site. 320 to 326 (VTTKRKR) is a binding site for substrate. GTP-binding positions include R326, 352 to 354 (KLD), and 435 to 437 (GVG).

It belongs to the adenylosuccinate synthetase family. In terms of assembly, homodimer. The cofactor is Mg(2+).

The protein localises to the cytoplasm. It carries out the reaction IMP + L-aspartate + GTP = N(6)-(1,2-dicarboxyethyl)-AMP + GDP + phosphate + 2 H(+). It participates in purine metabolism; AMP biosynthesis via de novo pathway; AMP from IMP: step 1/2. In terms of biological role, plays an important role in the de novo pathway and in the salvage pathway of purine nucleotide biosynthesis. Catalyzes the first committed step in the biosynthesis of AMP from IMP. This is Adenylosuccinate synthetase from Drosophila sechellia (Fruit fly).